Consider the following 294-residue polypeptide: uncharacterized protein (294 aa).

One can recognise a Tyrosine-protein phosphatase domain in the interval 13–151 (QCSQIRPYLY…LIDLEQKLRG (139 aa)). The active-site Phosphocysteine intermediate is C95. A disordered region spans residues 234–294 (PTLLVPSSSS…WRLSFHKDVV (61 aa)).

It belongs to the protein-tyrosine phosphatase family. Non-receptor class dual specificity subfamily.

This is an uncharacterized protein from Caenorhabditis elegans.